A 161-amino-acid polypeptide reads, in one-letter code: Large ribosomal subunit protein uL10 (161 aa).

Belongs to the universal ribosomal protein uL10 family. As to quaternary structure, part of the ribosomal stalk of the 50S ribosomal subunit. The N-terminus interacts with L11 and the large rRNA to form the base of the stalk. The C-terminus forms an elongated spine to which L12 dimers bind in a sequential fashion forming a multimeric L10(L12)X complex.

In terms of biological role, forms part of the ribosomal stalk, playing a central role in the interaction of the ribosome with GTP-bound translation factors. This Mycoplasma pneumoniae (strain ATCC 29342 / M129 / Subtype 1) (Mycoplasmoides pneumoniae) protein is Large ribosomal subunit protein uL10 (rplJ).